The following is a 384-amino-acid chain: Probable endopolygalacturonase C (384 aa).

The signal sequence occupies residues methionine 1–alanine 19. A propeptide spanning residues alanine 20–lysine 40 is cleaved from the precursor. Cysteine 45 and cysteine 63 form a disulfide bridge. PbH1 repeat units lie at residues serine 176–glutamate 207 and serine 208–serine 229. Aspartate 222 functions as the Proton donor in the catalytic mechanism. The cysteines at positions 224 and 240 are disulfide-linked. The active site involves histidine 244. PbH1 repeat units lie at residues arginine 254–threonine 280 and valine 288–glutamine 310. An N-linked (GlcNAc...) asparagine glycan is attached at asparagine 261. Intrachain disulfides connect cysteine 349–cysteine 354 and cysteine 373–cysteine 382.

It belongs to the glycosyl hydrolase 28 family.

Its subcellular location is the secreted. It carries out the reaction (1,4-alpha-D-galacturonosyl)n+m + H2O = (1,4-alpha-D-galacturonosyl)n + (1,4-alpha-D-galacturonosyl)m.. In terms of biological role, involved in maceration and soft-rotting of plant tissue. Hydrolyzes the 1,4-alpha glycosidic bonds of de-esterified pectate in the smooth region of the plant cell wall. This Aspergillus niger (strain ATCC MYA-4892 / CBS 513.88 / FGSC A1513) protein is Probable endopolygalacturonase C (pgaC).